A 1641-amino-acid chain; its full sequence is Alpha-2-macroglobulin (1641 aa).

The signal sequence occupies residues Met1–Gly31. Cys32 carries the N-palmitoyl cysteine lipid modification. Cys32 carries the S-diacylglycerol cysteine lipid modification. Residues Cys1166–Gln1169 constitute a cross-link (isoglutamyl cysteine thioester (Cys-Gln)).

It belongs to the protease inhibitor I39 (alpha-2-macroglobulin) family. Bacterial alpha-2-macroglobulin subfamily.

The protein localises to the cell membrane. Functionally, protects the bacterial cell from host peptidases. The sequence is that of Alpha-2-macroglobulin from Xylella fastidiosa (strain Temecula1 / ATCC 700964).